A 614-amino-acid chain; its full sequence is Dihydroxy-acid dehydratase (614 aa).

Asp-81 contributes to the Mg(2+) binding site. A [2Fe-2S] cluster-binding site is contributed by Cys-122. Residues Asp-123 and Lys-124 each contribute to the Mg(2+) site. Lys-124 is modified (N6-carboxylysine). A [2Fe-2S] cluster-binding site is contributed by Cys-193. Residue Glu-489 coordinates Mg(2+). Ser-515 (proton acceptor) is an active-site residue.

The protein belongs to the IlvD/Edd family. As to quaternary structure, homodimer. Requires [2Fe-2S] cluster as cofactor. The cofactor is Mg(2+).

The enzyme catalyses (2R)-2,3-dihydroxy-3-methylbutanoate = 3-methyl-2-oxobutanoate + H2O. It catalyses the reaction (2R,3R)-2,3-dihydroxy-3-methylpentanoate = (S)-3-methyl-2-oxopentanoate + H2O. The protein operates within amino-acid biosynthesis; L-isoleucine biosynthesis; L-isoleucine from 2-oxobutanoate: step 3/4. It functions in the pathway amino-acid biosynthesis; L-valine biosynthesis; L-valine from pyruvate: step 3/4. Its function is as follows. Functions in the biosynthesis of branched-chain amino acids. Catalyzes the dehydration of (2R,3R)-2,3-dihydroxy-3-methylpentanoate (2,3-dihydroxy-3-methylvalerate) into 2-oxo-3-methylpentanoate (2-oxo-3-methylvalerate) and of (2R)-2,3-dihydroxy-3-methylbutanoate (2,3-dihydroxyisovalerate) into 2-oxo-3-methylbutanoate (2-oxoisovalerate), the penultimate precursor to L-isoleucine and L-valine, respectively. The protein is Dihydroxy-acid dehydratase of Hahella chejuensis (strain KCTC 2396).